A 76-amino-acid chain; its full sequence is Acyl carrier protein (76 aa).

The Carrier domain maps to 1–76 (MSLEEKVKNI…DVIEYIKAHT (76 aa)). Position 36 is an O-(pantetheine 4'-phosphoryl)serine (Ser-36).

Belongs to the acyl carrier protein (ACP) family. 4'-phosphopantetheine is transferred from CoA to a specific serine of apo-ACP by AcpS. This modification is essential for activity because fatty acids are bound in thioester linkage to the sulfhydryl of the prosthetic group.

It is found in the cytoplasm. It participates in lipid metabolism; fatty acid biosynthesis. Its function is as follows. Carrier of the growing fatty acid chain in fatty acid biosynthesis. This Desulfatibacillum aliphaticivorans protein is Acyl carrier protein.